The primary structure comprises 711 residues: Putative membrane protein ActII-3 (711 aa).

The next 12 helical transmembrane spans lie at 14-34 (LKWL…PLAG), 175-195 (ADFK…VVTY), 199-219 (LLWL…QAIV), 235-255 (AMIL…LLVA), 281-301 (AIVA…LAAL), 313-333 (VGVL…LVIF), 369-389 (AVWV…VTLN), 516-536 (IIPV…RALV), 540-560 (LLIA…ALFF), 573-593 (FPLW…IFLV), 623-643 (AGLV…VFIA), and 645-665 (LGFT…SVLV). The interval 685-711 (REDPSEDPAVSGMPDSIDSEASTTASR) is disordered.

This sequence belongs to the resistance-nodulation-cell division (RND) (TC 2.A.6) family. MmpL subfamily.

It is found in the cell membrane. This is Putative membrane protein ActII-3 (actII-3) from Streptomyces coelicolor (strain ATCC BAA-471 / A3(2) / M145).